The sequence spans 160 residues: Cytochrome c-type biogenesis protein CcmE (160 aa).

Over 1 to 8 the chain is Cytoplasmic; that stretch reads MSAPRKTR. The helical; Signal-anchor for type II membrane protein transmembrane segment at 9–29 threads the bilayer; it reads LYAILAVICGAVLTVALTLYA. Topologically, residues 30–160 are periplasmic; it reads LSSNIDLFYT…PAAVTEGKRL (131 aa). Residues His130 and Tyr134 each coordinate heme.

Belongs to the CcmE/CycJ family.

The protein resides in the cell inner membrane. Functionally, heme chaperone required for the biogenesis of c-type cytochromes. Transiently binds heme delivered by CcmC and transfers the heme to apo-cytochromes in a process facilitated by CcmF and CcmH. In Pectobacterium carotovorum subsp. carotovorum (strain PC1), this protein is Cytochrome c-type biogenesis protein CcmE.